The sequence spans 162 residues: Putative 4-hydroxy-4-methyl-2-oxoglutarate aldolase (162 aa).

Substrate is bound by residues G75–L78 and R97. A divalent metal cation is bound at residue D98.

This sequence belongs to the class II aldolase/RraA-like family. Homotrimer. It depends on a divalent metal cation as a cofactor.

The catalysed reaction is 4-hydroxy-4-methyl-2-oxoglutarate = 2 pyruvate. It carries out the reaction oxaloacetate + H(+) = pyruvate + CO2. Its function is as follows. Catalyzes the aldol cleavage of 4-hydroxy-4-methyl-2-oxoglutarate (HMG) into 2 molecules of pyruvate. Also contains a secondary oxaloacetate (OAA) decarboxylase activity due to the common pyruvate enolate transition state formed following C-C bond cleavage in the retro-aldol and decarboxylation reactions. This is Putative 4-hydroxy-4-methyl-2-oxoglutarate aldolase from Stutzerimonas stutzeri (strain A1501) (Pseudomonas stutzeri).